Consider the following 450-residue polypeptide: Magnesium transporter MgtE (450 aa).

Topologically, residues 1–283 (MEEKLAVSLQ…SEAGPVALWL (283 aa)) are cytoplasmic. Mg(2+) is bound by residues glutamate 59, aspartate 91, aspartate 95, and glycine 136. CBS domains follow at residues 138–200 (MTPE…RVAE) and 202–258 (MNPK…EATE). Residues tyrosine 170, serine 185, arginine 187, aspartate 188, and valine 207 each contribute to the ATP site. Residues glutamate 216, alanine 223, aspartate 226, aspartate 247, aspartate 250, glutamate 255, glutamate 258, and aspartate 259 each coordinate Mg(2+). Glutamate 275 contributes to the Ca(2+) binding site. Glutamate 275, glutamine 304, glutamate 307, and glutamate 311 together coordinate Mn(2+). Residues 284–306 (ARVRWLVILILTGMVTSSILQGF) traverse the membrane as a helical segment. At 307–315 (ESVLEAVTA) the chain is on the periplasmic side. Glutamate 311 contacts Ca(2+). The helical transmembrane segment at 316–337 (LAFYVPVLLGTGGNTGNQSATL) threads the bilayer. Residues 338–351 (IIRALATRDLDLRD) are Cytoplasmic-facing. A helical membrane pass occupies residues 352–381 (WRRVFLKEMGVGLLLGLTLSFLLVGKVYWD). The Periplasmic segment spans residues 382 to 385 (GHPL). A Mn(2+)-binding site is contributed by histidine 383. The chain crosses the membrane as a helical span at residues 386–409 (LLPVVGVSLVLIVFFANLVGAMLP). At 410–420 (FLLRRLGVDPA) the chain is on the cytoplasmic side. Mg(2+) is bound by residues aspartate 418, alanine 428, and aspartate 432. The chain crosses the membrane as a helical span at residues 421-443 (LVSNPLVATLSDVTGLLIYLSVA). The Periplasmic portion of the chain corresponds to 444–450 (RLLLEAV).

Belongs to the SLC41A transporter family. In terms of assembly, homodimer.

The protein resides in the cell inner membrane. The enzyme catalyses Mg(2+)(in) = Mg(2+)(out). The channel activity is regulated via the N-terminal cytoplasmic region, which acts as a Mg(2+) sensor to regulate the gating of the ion-conducting pore in response to the intracellular magnesium concentration. Under high-intracellular magnesium conditions, binding of magnesium to the N-terminal cytoplasmic domain stabilizes the closed conformation of the channel. Under low-intracellular magnesium conditions, the channel is in equilibrium between the open and closed states. A cation-binding site within the membrane (M1) strictly recognizes the size and geometry of the Mg(2+) hydration shells, which may be important for the selective transport of Mg(2+) over other cations. Cation-binding sites on the periplasmic side (M2 and M3) regulate channel opening and prevent conduction of near-cognate cations. Binding of Mn(2+) to the periplasmic sites strongly inhibits the Mg(2+) transport activity. In addition, activity is regulated by ATP, which binds to MgtE and modulates its Mg(2+)-dependent channel gating. ATP binding enhances the intracellular domain affinity for Mg(2+) within physiological concentrations of this divalent cation, enabling MgtE to function as an in vivo Mg(2+) sensor. ATP dissociation from MgtE upregulates Mg(2+) influx at both high and low intracellular Mg(2+) concentrations. Its function is as follows. Highly selective magnesium channel that plays an important role in Mg(2+) homeostasis. Functions as a Mg(2+)-dependent gating channel. Exhibits low activity with cobalt, suggesting that it might also be involved in the uptake of Co(2+) as a micronutrient. Also exhibits low activity with Ca(2+), but it shows almost no activity with Mn(2+). The sequence is that of Magnesium transporter MgtE from Thermus thermophilus (strain ATCC 27634 / DSM 579 / HB8).